Here is an 896-residue protein sequence, read N- to C-terminus: Translation initiation factor IF-2 (896 aa).

A disordered region spans residues 32–306 (LAQAGSSDTK…HKTKKQSEEH (275 aa)). 2 stretches are compositionally biased toward polar residues: residues 35 to 48 (AGSS…VSKA) and 114 to 126 (ADST…SSQE). Positions 156 to 170 (ARNEETPIIRTRTEP) are enriched in basic and acidic residues. Polar residues predominate over residues 213-237 (QQTRPSVETASTKQQQPSGTNTRPA). The span at 256–280 (RGPDRDRTKRSDENVKAFTGRDRYG) shows a compositional bias: basic and acidic residues. One can recognise a tr-type G domain in the interval 401–570 (IRSPIVAFMG…ALQAEVLELK (170 aa)). The tract at residues 410–417 (GHVDHGKT) is G1. 410–417 (GHVDHGKT) provides a ligand contact to GTP. A G2 region spans residues 435-439 (AITQH). The segment at 456–459 (DTPG) is G3. Residues 456–460 (DTPGH) and 510–513 (NKCD) each bind GTP. The segment at 510–513 (NKCD) is G4. The G5 stretch occupies residues 546 to 548 (SAK).

This sequence belongs to the TRAFAC class translation factor GTPase superfamily. Classic translation factor GTPase family. IF-2 subfamily.

The protein localises to the cytoplasm. In terms of biological role, one of the essential components for the initiation of protein synthesis. Protects formylmethionyl-tRNA from spontaneous hydrolysis and promotes its binding to the 30S ribosomal subunits. Also involved in the hydrolysis of GTP during the formation of the 70S ribosomal complex. The chain is Translation initiation factor IF-2 (infB) from Chlamydia muridarum (strain MoPn / Nigg).